The chain runs to 472 residues: 2-amino-4-ketopentanoate thiolase beta subunit (472 aa).

N6-(pyridoxal phosphate)lysine is present on Lys-102. Pyridoxal 5'-phosphate is bound by residues Asn-128 and 238–242; that span reads AGGGN.

The protein belongs to the threonine synthase family. As to quaternary structure, heterodimer with OrtA. It depends on pyridoxal 5'-phosphate as a cofactor.

The catalysed reaction is D-alanine + acetyl-CoA = (2R)-2-amino-4-oxopentanoate + CoA. Its function is as follows. Involved in the ornithine fermentation pathway. Catalyzes the thiolytic cleavage of 2-amino-4-ketopentanoate (AKP) with coenzyme A (CoA) to form acetyl-CoA and alanine. It is strictly specific for AKP. This Unknown prokaryotic organism protein is 2-amino-4-ketopentanoate thiolase beta subunit.